A 318-amino-acid chain; its full sequence is Acetaldehyde dehydrogenase 2 (318 aa).

9 to 12 (SGNI) lines the NAD(+) pocket. Cys129 serves as the catalytic Acyl-thioester intermediate. NAD(+) contacts are provided by residues 160 to 168 (SAGPGTRAN) and Asn288.

The protein belongs to the acetaldehyde dehydrogenase family.

The catalysed reaction is acetaldehyde + NAD(+) + CoA = acetyl-CoA + NADH + H(+). The protein is Acetaldehyde dehydrogenase 2 of Mycolicibacterium vanbaalenii (strain DSM 7251 / JCM 13017 / BCRC 16820 / KCTC 9966 / NRRL B-24157 / PYR-1) (Mycobacterium vanbaalenii).